Reading from the N-terminus, the 237-residue chain is uncharacterized protein (237 aa).

Belongs to the ycf53 family.

The protein resides in the plastid. Its subcellular location is the chloroplast. This is an uncharacterized protein from Cyanidium caldarium (Red alga).